The sequence spans 616 residues: UvrABC system protein C (616 aa).

A GIY-YIG domain is found at 21–100; sequence TCPGVYQFKN…IKDLKPRYNI (80 aa). Residues 214-249 enclose the UVR domain; it reads GALIRTLSAEMHRYADELRFEEAAELKIQIEGLRKY.

The protein belongs to the UvrC family. As to quaternary structure, interacts with UvrB in an incision complex.

The protein localises to the cytoplasm. Functionally, the UvrABC repair system catalyzes the recognition and processing of DNA lesions. UvrC both incises the 5' and 3' sides of the lesion. The N-terminal half is responsible for the 3' incision and the C-terminal half is responsible for the 5' incision. The sequence is that of UvrABC system protein C from Prosthecochloris aestuarii (strain DSM 271 / SK 413).